A 169-amino-acid chain; its full sequence is Peptide methionine sulfoxide reductase MsrA (169 aa).

Residue Cys-10 is part of the active site.

The protein belongs to the MsrA Met sulfoxide reductase family.

The catalysed reaction is L-methionyl-[protein] + [thioredoxin]-disulfide + H2O = L-methionyl-(S)-S-oxide-[protein] + [thioredoxin]-dithiol. The enzyme catalyses [thioredoxin]-disulfide + L-methionine + H2O = L-methionine (S)-S-oxide + [thioredoxin]-dithiol. Functionally, has an important function as a repair enzyme for proteins that have been inactivated by oxidation. Catalyzes the reversible oxidation-reduction of methionine sulfoxide in proteins to methionine. The sequence is that of Peptide methionine sulfoxide reductase MsrA from Streptococcus pyogenes serotype M6 (strain ATCC BAA-946 / MGAS10394).